The primary structure comprises 154 residues: Ribonuclease H (154 aa).

The RNase H type-1 domain occupies 1–142 (MTKHVEIFTD…CDELARTAAE (142 aa)). Asp10, Glu48, Asp70, and Asp134 together coordinate Mg(2+).

Belongs to the RNase H family. As to quaternary structure, monomer. Mg(2+) is required as a cofactor.

Its subcellular location is the cytoplasm. The catalysed reaction is Endonucleolytic cleavage to 5'-phosphomonoester.. Endonuclease that specifically degrades the RNA of RNA-DNA hybrids. The chain is Ribonuclease H from Vibrio campbellii (strain ATCC BAA-1116).